The primary structure comprises 394 residues: 8-amino-7-oxononanoate synthase (394 aa).

R21 serves as a coordination point for substrate. 112 to 113 (GY) is a pyridoxal 5'-phosphate binding site. H137 is a binding site for substrate. S183, H211, and T239 together coordinate pyridoxal 5'-phosphate. Position 242 is an N6-(pyridoxal phosphate)lysine (K242). Residue T358 coordinates substrate.

It belongs to the class-II pyridoxal-phosphate-dependent aminotransferase family. BioF subfamily. Homodimer. It depends on pyridoxal 5'-phosphate as a cofactor.

It catalyses the reaction 6-carboxyhexanoyl-[ACP] + L-alanine + H(+) = (8S)-8-amino-7-oxononanoate + holo-[ACP] + CO2. It functions in the pathway cofactor biosynthesis; biotin biosynthesis. Its function is as follows. Catalyzes the decarboxylative condensation of pimeloyl-[acyl-carrier protein] and L-alanine to produce 8-amino-7-oxononanoate (AON), [acyl-carrier protein], and carbon dioxide. This Burkholderia cenocepacia (strain ATCC BAA-245 / DSM 16553 / LMG 16656 / NCTC 13227 / J2315 / CF5610) (Burkholderia cepacia (strain J2315)) protein is 8-amino-7-oxononanoate synthase.